We begin with the raw amino-acid sequence, 313 residues long: GDP-D-glycero-alpha-D-manno-heptose dehydrogenase (313 aa).

NADH is bound by residues 13–14, 33–39, phenylalanine 37, 57–58, leucine 77, and 144–148; these read YI, DNLMFDQ, DA, and YGIDK. Residue threonine 168 participates in GDP binding. NADH contacts are provided by residues valine 169 and 175 to 177; that span reads RMR. Residues 179–184, 196–198, arginine 204, lysine 242, and arginine 270 each bind GDP; these read DLLVND and VLF. Asparagine 311 serves as a coordination point for NADH.

Homotetramer. NAD(+) serves as cofactor.

It catalyses the reaction GDP-D-glycero-alpha-D-manno-heptose + 2-oxoglutarate = GDP-D-glycero-4-keto-alpha-D-lyxo-heptose + (S)-2-hydroxyglutarate. It functions in the pathway capsule biogenesis; capsule polysaccharide biosynthesis. In terms of biological role, NAD-dependent dehydrogenase involved in the biosynthesis of heptose moieties with a hydroxyl group at C6 found on the capsular polysaccharide (CPS) of C.jejuni. Catalyzes the initial oxidation of C4 of the GDP-D-glycero-alpha-D-manno-heptose to form GDP-D-glycero-4-keto-alpha-D-lyxo-heptose in the presence of alpha-ketoglutarate required to recycle the NADH nucleotide. In Campylobacter jejuni subsp. jejuni serotype O:2 (strain ATCC 700819 / NCTC 11168), this protein is GDP-D-glycero-alpha-D-manno-heptose dehydrogenase.